The chain runs to 449 residues: Probable glucuronosyltransferase 47 A (449 aa).

At Met-1–Arg-31 the chain is on the cytoplasmic side. A helical; Signal-anchor for type II membrane protein transmembrane segment spans residues Thr-32–Gln-52. The Lumenal segment spans residues Asp-53–Leu-449. Residues Asn-172 and Asn-433 are each glycosylated (N-linked (GlcNAc...) asparagine).

It belongs to the glycosyltransferase 47 family. As to expression, mostly expressed in newly formed or expanding tissues.

It is found in the golgi apparatus membrane. Its function is as follows. Involved in the synthesis of glucuronoxylan hemicellulose in secondary cell walls. This is Probable glucuronosyltransferase 47 A from Physcomitrium patens (Spreading-leaved earth moss).